The primary structure comprises 1151 residues: PPi-type phosphoenolpyruvate carboxykinase 1 (1151 aa).

Residues 1083–1129 (RQKLEVAKLNKDLAYLNKTIAEKPRLAETLNKQIAAVKEELQYVSSE) are a coiled coil.

Belongs to the PPi-type phosphoenolpyruvate carboxykinase family. As to quaternary structure, monomer and trimer; forms heterotrimers with PEPCK2 and PEPCK3.

It localises to the cytoplasm. Its subcellular location is the cytosol. The catalysed reaction is oxaloacetate + diphosphate = phosphoenolpyruvate + phosphate + CO2. Functionally, inorganic pyrophosphate (PPi)-dependent phosphoenolpyruvate carboxykinase, which regulates the carbon flow of the central metabolism by fixing CO(2) to phosphoenolpyruvate to produce oxaloacetate. Can also produce pyruvate and diphosphate from phosphoenolpyruvate and phosphate. This is PPi-type phosphoenolpyruvate carboxykinase 1 from Entamoeba histolytica (strain ATCC 30459 / HM-1:IMSS / ABRM).